Consider the following 450-residue polypeptide: Putative cysteine--tRNA ligase 2 (450 aa).

The short motif at isoleucine 29–histidine 39 is the 'HIGH' region element. The 'KMSKS' region motif lies at lysine 270–serine 274. Residue lysine 273 coordinates ATP. A disordered region spans residues proline 372–glutamine 392.

It belongs to the class-I aminoacyl-tRNA synthetase family. As to quaternary structure, monomer.

The protein resides in the cytoplasm. It carries out the reaction tRNA(Cys) + L-cysteine + ATP = L-cysteinyl-tRNA(Cys) + AMP + diphosphate. The chain is Putative cysteine--tRNA ligase 2 (cysS2) from Tropheryma whipplei (strain TW08/27) (Whipple's bacillus).